Consider the following 519-residue polypeptide: Cell division cycle protein 20 homolog B (519 aa).

Polar residues predominate over residues 79–98; that stretch reads QSQTRALSSDSFGEEQSTTY. Residues 79-133 form a disordered region; it reads QSQTRALSSDSFGEEQSTTYLPEASGSVLKTPPEKETLTLGSRKEQLKTPSKGIS. Residues 110-125 are compositionally biased toward basic and acidic residues; sequence PPEKETLTLGSRKEQL. WD repeat units lie at residues 229 to 266, 271 to 310, 311 to 341, 353 to 392, 399 to 441, 443 to 484, and 487 to 519; these read RNDYYLNILDWSFQNLVAIALGSAVYIWNGENHNGIEN, LTCNYISSVSWIKEGTCLAVGTSEGEVQLWDVVTKKRLRN, MLGHLSVVGALSWNHFILSSGSRLGRVYHHD, RHKQAVCALKWSPDGRLLSSGCSDGLLTIWPHDPGASAQG, TQST…SIQT, STNS…RSGG, and GHRGRVLHLSLSPDQTRVFSAAADGTASVWNCY.

Belongs to the WD repeat CDC20/Fizzy family. In terms of tissue distribution, expressed in multiciliated cells (MCCs).

The protein localises to the cytoplasm. In terms of biological role, protein regulator of centriole-deuterosome disengagement and subsequently participates in the ciliogenesis in multiciliated cells (MCCs). The protein is Cell division cycle protein 20 homolog B of Homo sapiens (Human).